We begin with the raw amino-acid sequence, 900 residues long: Bifunctional uridylyltransferase/uridylyl-removing enzyme (900 aa).

Residues 1-342 (MPQVDPELFD…PCEQPVQIQP (342 aa)) are uridylyltransferase. Residues 343 to 705 (LNSRFQLRDG…TTQREFESGS (363 aa)) are uridylyl-removing. The region spanning 461-583 (VDAHTLNLIK…VGDQTHLDYL (123 aa)) is the HD domain. ACT domains lie at 706-789 (QIFI…IIQR) and 816-891 (VLEV…DNGR).

It belongs to the GlnD family. It depends on Mg(2+) as a cofactor.

The enzyme catalyses [protein-PII]-L-tyrosine + UTP = [protein-PII]-uridylyl-L-tyrosine + diphosphate. The catalysed reaction is [protein-PII]-uridylyl-L-tyrosine + H2O = [protein-PII]-L-tyrosine + UMP + H(+). Its activity is regulated as follows. Uridylyltransferase (UTase) activity is inhibited by glutamine, while glutamine activates uridylyl-removing (UR) activity. Modifies, by uridylylation and deuridylylation, the PII regulatory proteins (GlnB and homologs), in response to the nitrogen status of the cell that GlnD senses through the glutamine level. Under low glutamine levels, catalyzes the conversion of the PII proteins and UTP to PII-UMP and PPi, while under higher glutamine levels, GlnD hydrolyzes PII-UMP to PII and UMP (deuridylylation). Thus, controls uridylylation state and activity of the PII proteins, and plays an important role in the regulation of nitrogen assimilation and metabolism. The chain is Bifunctional uridylyltransferase/uridylyl-removing enzyme from Pseudomonas aeruginosa (strain ATCC 15692 / DSM 22644 / CIP 104116 / JCM 14847 / LMG 12228 / 1C / PRS 101 / PAO1).